A 134-amino-acid polypeptide reads, in one-letter code: Small ribosomal subunit protein bS6 (134 aa).

A compositionally biased stretch (basic and acidic residues) spans 113 to 122; that stretch reads NKDIKEKEQP. The tract at residues 113-134 is disordered; the sequence is NKDIKEKEQPSESNVDADLKVN.

The protein belongs to the bacterial ribosomal protein bS6 family.

Its function is as follows. Binds together with bS18 to 16S ribosomal RNA. The chain is Small ribosomal subunit protein bS6 from Borrelia recurrentis (strain A1).